Here is a 100-residue protein sequence, read N- to C-terminus: Co-chaperonin GroES (100 aa).

The protein belongs to the GroES chaperonin family. In terms of assembly, heptamer of 7 subunits arranged in a ring. Interacts with the chaperonin GroEL.

It localises to the cytoplasm. Together with the chaperonin GroEL, plays an essential role in assisting protein folding. The GroEL-GroES system forms a nano-cage that allows encapsulation of the non-native substrate proteins and provides a physical environment optimized to promote and accelerate protein folding. GroES binds to the apical surface of the GroEL ring, thereby capping the opening of the GroEL channel. The protein is Co-chaperonin GroES of Rhodothermus marinus (Rhodothermus obamensis).